Here is a 209-residue protein sequence, read N- to C-terminus: Thiamine-phosphate synthase (209 aa).

Residues Q37 to K41 and N69 each bind 4-amino-2-methyl-5-(diphosphooxymethyl)pyrimidine. Residues D70 and D89 each coordinate Mg(2+). A 4-amino-2-methyl-5-(diphosphooxymethyl)pyrimidine-binding site is contributed by S108. Residue T134–T136 coordinates 2-[(2R,5Z)-2-carboxy-4-methylthiazol-5(2H)-ylidene]ethyl phosphate. K137 is a binding site for 4-amino-2-methyl-5-(diphosphooxymethyl)pyrimidine. Residues G164 and V184–S185 each bind 2-[(2R,5Z)-2-carboxy-4-methylthiazol-5(2H)-ylidene]ethyl phosphate.

It belongs to the thiamine-phosphate synthase family. Mg(2+) is required as a cofactor.

The catalysed reaction is 2-[(2R,5Z)-2-carboxy-4-methylthiazol-5(2H)-ylidene]ethyl phosphate + 4-amino-2-methyl-5-(diphosphooxymethyl)pyrimidine + 2 H(+) = thiamine phosphate + CO2 + diphosphate. It catalyses the reaction 2-(2-carboxy-4-methylthiazol-5-yl)ethyl phosphate + 4-amino-2-methyl-5-(diphosphooxymethyl)pyrimidine + 2 H(+) = thiamine phosphate + CO2 + diphosphate. It carries out the reaction 4-methyl-5-(2-phosphooxyethyl)-thiazole + 4-amino-2-methyl-5-(diphosphooxymethyl)pyrimidine + H(+) = thiamine phosphate + diphosphate. Its pathway is cofactor biosynthesis; thiamine diphosphate biosynthesis; thiamine phosphate from 4-amino-2-methyl-5-diphosphomethylpyrimidine and 4-methyl-5-(2-phosphoethyl)-thiazole: step 1/1. Its function is as follows. Condenses 4-methyl-5-(beta-hydroxyethyl)thiazole monophosphate (THZ-P) and 2-methyl-4-amino-5-hydroxymethyl pyrimidine pyrophosphate (HMP-PP) to form thiamine monophosphate (TMP). The chain is Thiamine-phosphate synthase from Methanobrevibacter smithii (strain ATCC 35061 / DSM 861 / OCM 144 / PS).